Here is a 539-residue protein sequence, read N- to C-terminus: Phosphoenolpyruvate carboxykinase (ATP) (539 aa).

The substrate site is built by arginine 61, tyrosine 195, and lysine 201. ATP is bound by residues lysine 201, histidine 220, and 238–246; that span reads GLSGTGKTT. Mn(2+) is bound by residues lysine 201 and histidine 220. A Mn(2+)-binding site is contributed by aspartate 259. ATP-binding residues include glutamate 287, arginine 325, and threonine 450. Position 325 (arginine 325) interacts with substrate.

Belongs to the phosphoenolpyruvate carboxykinase (ATP) family. Mn(2+) is required as a cofactor.

Its subcellular location is the cytoplasm. The catalysed reaction is oxaloacetate + ATP = phosphoenolpyruvate + ADP + CO2. Its pathway is carbohydrate biosynthesis; gluconeogenesis. Involved in the gluconeogenesis. Catalyzes the conversion of oxaloacetate (OAA) to phosphoenolpyruvate (PEP) through direct phosphoryl transfer between the nucleoside triphosphate and OAA. The protein is Phosphoenolpyruvate carboxykinase (ATP) of Methylobacterium radiotolerans (strain ATCC 27329 / DSM 1819 / JCM 2831 / NBRC 15690 / NCIMB 10815 / 0-1).